A 367-amino-acid chain; its full sequence is Apolipoprotein A-V (367 aa).

Positions 1-20 are cleaved as a signal peptide; it reads MVAVLTWALALLSAFATVQT. Residue Ser56 is modified to Phosphoserine. A disordered region spans residues 71 to 90; that stretch reads LGPLSGQGREPPGLPHDPEG.

Belongs to the apolipoprotein A1/A4/E family. Interacts with GPIHBP1. Interacts with SORL1; this interaction leads to APOA5 internalization and sorting either to lysosomes and degradation, or to the trans-Golgi network. In terms of processing, phosphorylated by FAM20C in the extracellular medium.

The protein localises to the secreted. Its subcellular location is the early endosome. It is found in the late endosome. The protein resides in the golgi apparatus. It localises to the trans-Golgi network. Functionally, minor apolipoprotein mainly associated with HDL and to a lesser extent with VLDL. May also be associated with chylomicrons. Important determinant of plasma triglyceride (TG) levels by both being a potent stimulator of apo-CII lipoprotein lipase (LPL) TG hydrolysis and an inhibitor of the hepatic VLDL-TG production rate (without affecting the VLDL-apoB production rate). Activates poorly lecithin:cholesterol acyltransferase (LCAT) and does not enhance efflux of cholesterol from macrophages. Binds heparin. The polypeptide is Apolipoprotein A-V (APOA5) (Neomonachus schauinslandi (Hawaiian monk seal)).